A 213-amino-acid chain; its full sequence is Phosphoheptose isomerase (213 aa).

The 159-residue stretch at 50 to 208 (MAETFEGGGR…IDLVERMLGY (159 aa)) folds into the SIS domain. 65–67 (NGG) contributes to the substrate binding site. Zn(2+) contacts are provided by H74 and E78. Substrate is bound by residues E78, 109–110 (ND), 135–137 (STS), S140, and Q188. Residues Q188 and H196 each contribute to the Zn(2+) site.

This sequence belongs to the SIS family. GmhA subfamily. Requires Zn(2+) as cofactor.

It localises to the cytoplasm. It catalyses the reaction 2 D-sedoheptulose 7-phosphate = D-glycero-alpha-D-manno-heptose 7-phosphate + D-glycero-beta-D-manno-heptose 7-phosphate. Its pathway is carbohydrate biosynthesis; D-glycero-D-manno-heptose 7-phosphate biosynthesis; D-glycero-alpha-D-manno-heptose 7-phosphate and D-glycero-beta-D-manno-heptose 7-phosphate from sedoheptulose 7-phosphate: step 1/1. In terms of biological role, catalyzes the isomerization of sedoheptulose 7-phosphate in D-glycero-D-manno-heptose 7-phosphate. This chain is Phosphoheptose isomerase, found in Chlorobium phaeovibrioides (strain DSM 265 / 1930) (Prosthecochloris vibrioformis (strain DSM 265)).